The sequence spans 876 residues: Alanine--tRNA ligase (876 aa).

Zn(2+) contacts are provided by His565, His569, Cys667, and His671.

This sequence belongs to the class-II aminoacyl-tRNA synthetase family. The cofactor is Zn(2+).

It is found in the cytoplasm. The catalysed reaction is tRNA(Ala) + L-alanine + ATP = L-alanyl-tRNA(Ala) + AMP + diphosphate. Its function is as follows. Catalyzes the attachment of alanine to tRNA(Ala) in a two-step reaction: alanine is first activated by ATP to form Ala-AMP and then transferred to the acceptor end of tRNA(Ala). Also edits incorrectly charged Ser-tRNA(Ala) and Gly-tRNA(Ala) via its editing domain. This chain is Alanine--tRNA ligase, found in Staphylococcus aureus (strain bovine RF122 / ET3-1).